A 208-amino-acid polypeptide reads, in one-letter code: Small ribosomal subunit protein uS4 (208 aa).

An S4 RNA-binding domain is found at 98–158 (RRLDNVVYRL…EKSRKIACIN (61 aa)).

The protein belongs to the universal ribosomal protein uS4 family. Part of the 30S ribosomal subunit. Contacts protein S5. The interaction surface between S4 and S5 is involved in control of translational fidelity.

In terms of biological role, one of the primary rRNA binding proteins, it binds directly to 16S rRNA where it nucleates assembly of the body of the 30S subunit. Its function is as follows. With S5 and S12 plays an important role in translational accuracy. The polypeptide is Small ribosomal subunit protein uS4 (Geobacter metallireducens (strain ATCC 53774 / DSM 7210 / GS-15)).